Here is a 138-residue protein sequence, read N- to C-terminus: Small ribosomal subunit protein uS11c (138 aa).

Residues 1–23 form a disordered region; the sequence is MAKPIPRIGSRKNGRIGSRKSGR. Over residues 9–23 the composition is skewed to basic residues; it reads GSRKNGRIGSRKSGR.

The protein belongs to the universal ribosomal protein uS11 family. In terms of assembly, part of the 30S ribosomal subunit.

It localises to the plastid. The protein localises to the chloroplast. The protein is Small ribosomal subunit protein uS11c of Buxus microphylla (Littleleaf boxwood).